The following is a 782-amino-acid chain: Potassium transporter 6 (782 aa).

Residues 1–18 are Cytoplasmic-facing; sequence MEIESGSYQNAKKESWRT. The helical transmembrane segment at 19 to 39 threads the bilayer; it reads VLTLAYQSLGVVYGDLSISPL. At 40–61 the chain is on the extracellular side; it reads YVYKSTFAEDIHHSESNEEIFG. Residues 62–82 traverse the membrane as a helical segment; sequence VLSFIFWTITLVPLLKYVFIV. Residues 83–153 are Cytoplasmic-facing; that stretch reads LRADDNGEGG…TLEKHGVLQK (71 aa). A helical transmembrane segment spans residues 154–174; sequence ILLVLALIGTCMVIGDGVLTP. The Extracellular segment spans residues 175–195; it reads AISVFSAVSGVELSMSKEHHK. A helical membrane pass occupies residues 196 to 216; sequence YIELPAACVILIGLFALQHYG. Residues 217 to 219 are Cytoplasmic-facing; sequence THR. The helical transmembrane segment at 220–240 threads the bilayer; that stretch reads VGFLFAPVILLWLMCISAIGV. The Extracellular segment spans residues 241–270; sequence YNIFHWNPHVYQALSPYYMYKFLKKTQSRG. The helical transmembrane segment at 271–291 threads the bilayer; it reads WMSLGGILLCITGSEAMFADL. Residues 292–296 lie on the Cytoplasmic side of the membrane; it reads GHFSQ. A helical membrane pass occupies residues 297–317; sequence LSIKIAFTSLVYPSLILAYMG. At 318-347 the chain is on the extracellular side; the sequence is QAAYLSQHHIIESEYNIGFYVSVPERLRWP. Residues 348 to 368 form a helical membrane-spanning segment; the sequence is VLVIAILAAVVGSQAIITGTF. Topologically, residues 369-395 are cytoplasmic; that stretch reads SIIKQCSALGCFPKVKIVHTSSKIHGQ. A helical transmembrane segment spans residues 396–416; it reads IYIPEINWILMVLCLAVTIGF. Residues 417 to 421 are Extracellular-facing; sequence RDTKR. The next 2 helical transmembrane spans lie at 422–442 and 443–463; these read LGNA…CLMS and LVIV…VVFF. The Extracellular portion of the chain corresponds to 464–474; that stretch reads GTIESLYFSAS. Residues 475 to 495 form a helical membrane-spanning segment; it reads LIKFLEGAWVPIALAFCFLLA. Topologically, residues 496–782 are cytoplasmic; it reads MCTWHYGTLK…TLEVGMIYNV (287 aa). The span at 664–675 shows a compositional bias: basic and acidic residues; the sequence is YESDIDDPDKPG. A disordered region spans residues 664 to 693; the sequence is YESDIDDPDKPGTSEIRSPKPKKKSKSKVK. Basic residues predominate over residues 682 to 693; that stretch reads PKPKKKSKSKVK.

It belongs to the HAK/KUP transporter (TC 2.A.72.3) family.

It localises to the cell membrane. Functionally, probable potassium transporter. This Arabidopsis thaliana (Mouse-ear cress) protein is Potassium transporter 6 (POT6).